The following is a 149-amino-acid chain: DnaJ homolog subfamily C member 24 (149 aa).

The J domain maps to 11-82 (DWYSILGADP…ETKKEYDLQR (72 aa)). The DPH-type MB domain occupies 93–148 (VDARIYLEEMSWNEDDHSFSLSCRCGGKYSVSKDEAEEVTLISCDTCSLIIELLHY). The Zn(2+) site is built by C115, C117, C136, and C139.

Belongs to the DPH4 family. As to quaternary structure, monomer and homooligomer. Iron binding promotes oligomerization.

The protein resides in the cytoplasm. Its subcellular location is the cytoskeleton. Its pathway is protein modification; peptidyl-diphthamide biosynthesis. In terms of biological role, stimulates the ATPase activity of several Hsp70-type chaperones. This ability is enhanced by iron-binding. The iron-bound form is redox-active and can function as electron carrier. Plays a role in the diphthamide biosynthesis, a post-translational modification of histidine which occurs in translation elongation factor 2 (EEF2). In Bos taurus (Bovine), this protein is DnaJ homolog subfamily C member 24 (DNAJC24).